Consider the following 549-residue polypeptide: Dicarboxylate transporter 2.2, chloroplastic (549 aa).

A chloroplast-targeting transit peptide spans 1-54 (MESLALRSISLSASYLSLHRSSSKSFALLPPSISVHTSPTLRSLSISSPRFTLR). The tract at residues 57 to 79 (ASSLPEEQNKPQPPPPSPPQPQG) is disordered. A compositionally biased stretch (pro residues) spans 67–77 (PQPPPPSPPQP). The next 12 helical transmembrane spans lie at 79-99 (GAKLIPLAISVSIGLIVRFLI), 115-135 (IFLFTISGLVLGPLPVGAWAF), 151-171 (TAFAAFTNELIWLIAISFFFA), 220-240 (AGGVFLPVIKSLAISAGSYPG), 247-267 (LGSFLIQTQLQCSGASGAILL), 294-314 (WFKVASVPAFVSLLCTPLIIY), 344-364 (NEWIMLGAMAFTVSLWVFGEA), 365-385 (IGIASVVSAMIGLSTLLLLGV), 403-423 (WFAVLIGMAGQLTNLGVVAWM), 436-456 (LTWPASFIILQACYLLIHYLF), 470-490 (FLAMQIAAGVPGVLAALCLAF), and 523-543 (VGFVMALVQAIIWGGVGSFWW).

Belongs to the SLC13A/DASS transporter (TC 2.A.47) family. DIT1 subfamily. As to expression, expressed in roots, rosette and cauline leaves, stems, flowers and siliques.

Its subcellular location is the plastid. It localises to the chloroplast inner membrane. Functionally, may be involved in the transport of dicarboxylate compounds. This chain is Dicarboxylate transporter 2.2, chloroplastic (DIT2-2), found in Arabidopsis thaliana (Mouse-ear cress).